We begin with the raw amino-acid sequence, 332 residues long: UDP-3-O-acylglucosamine N-acyltransferase (332 aa).

His-235 acts as the Proton acceptor in catalysis.

This sequence belongs to the transferase hexapeptide repeat family. LpxD subfamily. As to quaternary structure, homotrimer.

It catalyses the reaction a UDP-3-O-[(3R)-3-hydroxyacyl]-alpha-D-glucosamine + a (3R)-hydroxyacyl-[ACP] = a UDP-2-N,3-O-bis[(3R)-3-hydroxyacyl]-alpha-D-glucosamine + holo-[ACP] + H(+). It participates in bacterial outer membrane biogenesis; LPS lipid A biosynthesis. Catalyzes the N-acylation of UDP-3-O-acylglucosamine using 3-hydroxyacyl-ACP as the acyl donor. Is involved in the biosynthesis of lipid A, a phosphorylated glycolipid that anchors the lipopolysaccharide to the outer membrane of the cell. The sequence is that of UDP-3-O-acylglucosamine N-acyltransferase from Fusobacterium nucleatum subsp. nucleatum (strain ATCC 25586 / DSM 15643 / BCRC 10681 / CIP 101130 / JCM 8532 / KCTC 2640 / LMG 13131 / VPI 4355).